Here is a 289-residue protein sequence, read N- to C-terminus: Dermonecrotic toxin LarSicTox-betaID1 (289 aa).

The N-terminal stretch at 1-2 (EG) is a signal peptide. Residues 3–11 (AEQDGSERT) constitute a propeptide that is removed on maturation. Histidine 22 is a catalytic residue. The Mg(2+) site is built by glutamate 42 and aspartate 44. Residue histidine 58 is the Nucleophile of the active site. Intrachain disulfides connect cysteine 62–cysteine 68 and cysteine 64–cysteine 207. Aspartate 102 lines the Mg(2+) pocket.

Belongs to the arthropod phospholipase D family. Class II subfamily. Mg(2+) serves as cofactor. As to expression, expressed by the venom gland.

It is found in the secreted. It carries out the reaction an N-(acyl)-sphingosylphosphocholine = an N-(acyl)-sphingosyl-1,3-cyclic phosphate + choline. It catalyses the reaction N-hexanoyl-sphing-4-enine-1-phosphocholine = N-(hexanoyl)-sphing-4-enine-1,3-cyclic phosphate + choline. The enzyme catalyses N-(dodecanoyl)-sphing-4-enine-1-phosphocholine = N-dodecanoyl-sphing-4-enine-1,3-cyclic phosphate + choline. The catalysed reaction is an N-(acyl)-sphingosylphosphoethanolamine = an N-(acyl)-sphingosyl-1,3-cyclic phosphate + ethanolamine. It carries out the reaction N-dodecanoyl-heptadecasphing-4-enine-1-phosphoethanolamine = N-dodecanoyl-heptadecasphing-4-enine-1,3-cyclic phosphate + ethanolamine. It catalyses the reaction a 1-acyl-sn-glycero-3-phosphocholine = a 1-acyl-sn-glycero-2,3-cyclic phosphate + choline. The enzyme catalyses 1-tetradecanoyl-sn-glycero-3-phosphocholine = 1-tetradecanoyl-sn-glycero-2,3-cyclic phosphate + choline. The catalysed reaction is 1-octanoyl-sn-glycero-3-phosphocholine = 1-octanoyl-sn-glycero-2,3-cyclic phosphate + choline. It carries out the reaction a 1-acyl-sn-glycero-3-phosphoethanolamine = a 1-acyl-sn-glycero-2,3-cyclic phosphate + ethanolamine. It catalyses the reaction 1-tetradecanoyl-sn-glycero-3-phosphoethanolamine = 1-tetradecanoyl-sn-glycero-2,3-cyclic phosphate + ethanolamine. Its function is as follows. Dermonecrotic toxins cleave the phosphodiester linkage between the phosphate and headgroup of certain phospholipids (sphingolipid and lysolipid substrates), forming an alcohol (often choline) and a cyclic phosphate. This toxin acts on sphingomyelin (SM) and on ceramide phosphoethanolamine (CPE) with high activity. It also acts on lysophosphatidylcholine (LPC) and on lysophosphatidylethanolamine (LPE) with moderate activity. It is not active on lysophosphatidylserine (LPS), and lysophosphatidylglycerol (LPG). It acts by transphosphatidylation, releasing exclusively cyclic phosphate as second products. It is not surprising that spider toxins have affinity for ethanolamine-containing sphingolipids since they are common in insect prey. On mammals, induces dermonecrosis, hemolysis, increased vascular permeability, edema, inflammatory response, and platelet aggregation. This Loxosceles arizonica (Arizona brown spider) protein is Dermonecrotic toxin LarSicTox-betaID1.